A 419-amino-acid polypeptide reads, in one-letter code: MTTQLEQAWELAKQRFAAVGIDIEEALRQLDRLPVSMHCWQGDDVAGFENPEGSLTGGIQSTGNYPGKARNATELRADLEQALRLIPGPKRLNLHAIYLESDTPVARDQIKPEHFKNWVEWAKANRLGLDFNPTCFSHPLSADGFTLSHPDAKIRQFWIDHCKASRRVSAYFGEQLGTPSVMNIWIPDGMKDITVDRLAPRQRLLEALDEVISEKFDPAHHIDAVESKLFGIGAESYTVGSNEFYMGYATSRQTALCLDAGHFHPTEVISDKISAAMLYVPRLLLHVSRPVRWDSDHVVLLDDETQAIASEIVRHNLFDRVHIGLDFFDASINRVAAWVIGTRNMKKALLRALLEPTDQLRQLEASGDYTARLALLEEQKSLPWQAVWEMYCQRHDTPAGSQWLDSVRAYEKEILSKRS.

3 residues coordinate Mn(2+): His-262, Asp-294, and Asp-296.

This sequence belongs to the rhamnose isomerase family. Homotetramer. The cofactor is Mn(2+).

The protein localises to the cytoplasm. The catalysed reaction is L-rhamnopyranose = L-rhamnulose. It participates in carbohydrate degradation; L-rhamnose degradation; glycerone phosphate from L-rhamnose: step 1/3. In terms of biological role, catalyzes the interconversion of L-rhamnose and L-rhamnulose. The chain is L-rhamnose isomerase from Salmonella newport (strain SL254).